The sequence spans 329 residues: DNA-directed RNA polymerase subunit alpha (329 aa).

Residues 1–235 are alpha N-terminal domain (alpha-NTD); that stretch reads MQGSVTEFLK…EQLEAFVDLR (235 aa). The interval 249–329 is alpha C-terminal domain (alpha-CTD); that stretch reads FDPILLRPVD…NWPPASIADE (81 aa).

The protein belongs to the RNA polymerase alpha chain family. Homodimer. The RNAP catalytic core consists of 2 alpha, 1 beta, 1 beta' and 1 omega subunit. When a sigma factor is associated with the core the holoenzyme is formed, which can initiate transcription.

It catalyses the reaction RNA(n) + a ribonucleoside 5'-triphosphate = RNA(n+1) + diphosphate. Functionally, DNA-dependent RNA polymerase catalyzes the transcription of DNA into RNA using the four ribonucleoside triphosphates as substrates. The sequence is that of DNA-directed RNA polymerase subunit alpha from Photorhabdus laumondii subsp. laumondii (strain DSM 15139 / CIP 105565 / TT01) (Photorhabdus luminescens subsp. laumondii).